The following is a 309-amino-acid chain: Acetyl-coenzyme A carboxylase carboxyl transferase subunit beta (309 aa).

Positions 29-298 constitute a CoA carboxyltransferase N-terminal domain; sequence NSDWTSCCKG…AINSSENETS (270 aa). Residues Cys35, Cys36, Cys52, and Cys55 each coordinate Zn(2+).

The protein belongs to the AccD/PCCB family. As to quaternary structure, acetyl-CoA carboxylase is a heterohexamer composed of biotin carboxyl carrier protein (AccB), biotin carboxylase (AccC) and two subunits each of ACCase subunit alpha (AccA) and ACCase subunit beta (AccD). The cofactor is Zn(2+).

It is found in the cytoplasm. The catalysed reaction is N(6)-carboxybiotinyl-L-lysyl-[protein] + acetyl-CoA = N(6)-biotinyl-L-lysyl-[protein] + malonyl-CoA. Its pathway is lipid metabolism; malonyl-CoA biosynthesis; malonyl-CoA from acetyl-CoA: step 1/1. Component of the acetyl coenzyme A carboxylase (ACC) complex. Biotin carboxylase (BC) catalyzes the carboxylation of biotin on its carrier protein (BCCP) and then the CO(2) group is transferred by the transcarboxylase to acetyl-CoA to form malonyl-CoA. This Pelagibacter ubique (strain HTCC1062) protein is Acetyl-coenzyme A carboxylase carboxyl transferase subunit beta.